Consider the following 417-residue polypeptide: PRKCA-binding protein (417 aa).

Residues 22–105 (KVTLQKDAQN…EVTIHYNKLQ (84 aa)) enclose the PDZ domain. Zn(2+) contacts are provided by cysteine 44 and cysteine 46. At threonine 82 the chain carries Phosphothreonine. The AH domain occupies 144–357 (LCNDGLVKRL…CYSVLRDADV (214 aa)). The disordered stretch occupies residues 375–417 (QDEFTDGEDEEDEDEEDTAAGEPPRDSRGAAGPLDKGGSWCNS). Over residues 377–393 (EFTDGEDEEDEDEEDTA) the composition is skewed to acidic residues. A lipid anchor (S-palmitoyl cysteine; by DHHC8) is attached at cysteine 415.

Monomer and homodimer. Interacts with CXADR. Interacts presynaptically with the glutamate receptors GRIA2, GRIA3, GRIK3, isoform 3 of GRIA4, isoform A of GRM4, GRM7 and GRM8; with NAPA and NAPB; and with BTG2. The interaction with NAPA and NAPB disrupts the interaction with GRIA2, conducting to the internalization of GRIA2. Interacts with PRKCA; with the amine transporters SLC6A2 and SLC6A3; with the channels ASIC1 and ASIC2; with the GTP-binding proteins ARF1 and ARF3; with the ephrin receptor tyrosine kinases EPHA7, EPHB1 and EPHB2; with ERBB2 and through its PDZ domain with the C-terminal tail of PRLHR. Interacts with UNC5A. Interacts (via AH domain) with NCS1/FREQ; in a calcium-dependent manner. Interacts with F-actin and associates with the ARP2/3 complex. Interacts (via PDZ domain) with ARF1 (activated); the interaction blocks Arp2/3 complex inhibition. Interacts with SORCS3. Post-translationally, phosphorylation at Thr-82 appears to inhibit the interaction with AMPA receptors. In terms of processing, palmitoylation on Cys-415 is essential for long-term synaptic depression (LTD).

It localises to the cytoplasm. Its subcellular location is the perinuclear region. It is found in the membrane. The protein localises to the postsynaptic density. The protein resides in the synapse. It localises to the synaptosome. Its subcellular location is the cytoskeleton. Its function is as follows. Probable adapter protein that bind to and organize the subcellular localization of a variety of membrane proteins containing some PDZ recognition sequence. Involved in the clustering of various receptors, possibly by acting at the receptor internalization level. Plays a role in synaptic plasticity by regulating the trafficking and internalization of AMPA receptors. May be regulated upon PRKCA activation. May regulate ASIC1/ASIC3 channel. Regulates actin polymerization by inhibiting the actin-nucleating activity of the Arp2/3 complex; the function is competitive with nucleation promoting factors and is linked to neuronal morphology regulation and AMPA receptor (AMPAR) endocytosis. Via interaction with the Arp2/3 complex involved in regulation of synaptic plasicity of excitatory synapses and required for spine shrinkage during long-term depression (LTD). Involved in regulation of astrocyte morphology, antagonistic to Arp2/3 complex activator WASL/N-WASP function. The protein is PRKCA-binding protein (PICK1) of Bos taurus (Bovine).